A 412-amino-acid chain; its full sequence is Phosphoglycerate kinase (412 aa).

Substrate-binding positions include 26–28 (DFN), Arg42, 65–68 (HLGR), Arg133, and Arg166. ATP is bound by residues Lys217, Gly308, Glu339, and 368–371 (GGDS).

Belongs to the phosphoglycerate kinase family. Monomer.

Its subcellular location is the cytoplasm. The catalysed reaction is (2R)-3-phosphoglycerate + ATP = (2R)-3-phospho-glyceroyl phosphate + ADP. The protein operates within carbohydrate degradation; glycolysis; pyruvate from D-glyceraldehyde 3-phosphate: step 2/5. The protein is Phosphoglycerate kinase of Synechococcus sp. (strain JA-3-3Ab) (Cyanobacteria bacterium Yellowstone A-Prime).